Consider the following 744-residue polypeptide: Dual specificity protein kinase shkD (744 aa).

The interval 1-276 (MKRFFSNLFK…SGPPEILPEE (276 aa)) is disordered. Composition is skewed to low complexity over residues 25–70 (PTTS…NSNQ), 79–107 (SPSTNQTQTPSNNTISTSPTVTTQPSFTP), and 127–200 (TSTT…QTAS). Residues 201 to 210 (VNHTSSDQSL) show a composition bias toward polar residues. The segment covering 211-236 (NAQNVTQTNNNNNNNNNNNNNNNANN) has biased composition (low complexity). The 258-residue stretch at 277–534 (IDRTDFLGQG…EILFRLNEIL (258 aa)) folds into the Protein kinase domain. ATP contacts are provided by residues 283 to 291 (LGQGSFGSV) and lysine 304. Residue aspartate 400 is the Proton acceptor of the active site. In terms of domain architecture, SH2 spans 641–734 (WFHGDIVREQ…LVPCPKFTQE (94 aa)).

It belongs to the protein kinase superfamily. Ser/Thr protein kinase family. SH2 domain-containing protein kinase subfamily.

Its subcellular location is the membrane. It carries out the reaction L-seryl-[protein] + ATP = O-phospho-L-seryl-[protein] + ADP + H(+). It catalyses the reaction L-threonyl-[protein] + ATP = O-phospho-L-threonyl-[protein] + ADP + H(+). Required for proper chemotaxis and phagocytosis; proper spatiotemporal control of F-actin levels in chemotaxing cells. Negative regulator of the PI3K (phosphatidylinositol 3 kinase) pathway. Predominantly phosphorylates serines and threonines and tyrosines at a lower level. This is Dual specificity protein kinase shkD (shkD) from Dictyostelium discoideum (Social amoeba).